Here is a 377-residue protein sequence, read N- to C-terminus: Nitric oxide reductase FlRd-NAD(+) reductase (377 aa).

It belongs to the FAD-dependent oxidoreductase family. Requires FAD as cofactor.

It localises to the cytoplasm. It catalyses the reaction 2 reduced [nitric oxide reductase rubredoxin domain] + NAD(+) + H(+) = 2 oxidized [nitric oxide reductase rubredoxin domain] + NADH. Its pathway is nitrogen metabolism; nitric oxide reduction. In terms of biological role, one of at least two accessory proteins for anaerobic nitric oxide (NO) reductase. Reduces the rubredoxin moiety of NO reductase. This Salmonella dublin (strain CT_02021853) protein is Nitric oxide reductase FlRd-NAD(+) reductase.